Reading from the N-terminus, the 708-residue chain is Exocyst complex component 5 (708 aa).

At Ala2 the chain carries N-acetylalanine. Positions 40 to 101 form a coiled coil; the sequence is KRLLEEFVNH…AFQHFQELDE (62 aa). Phosphothreonine occurs at positions 122, 395, and 405. Ser412 bears the Phosphoserine mark.

This sequence belongs to the SEC10 family. As to quaternary structure, the exocyst complex is composed of EXOC1, EXOC2, EXOC3, EXOC4, EXOC5, EXOC6, EXOC7 and EXOC8. Interacts with EXOC3L1.

It localises to the cytoplasm. The protein localises to the midbody. Its function is as follows. Component of the exocyst complex involved in the docking of exocytic vesicles with fusion sites on the plasma membrane. This is Exocyst complex component 5 (Exoc5) from Mus musculus (Mouse).